Here is a 68-residue protein sequence, read N- to C-terminus: Peptide Hp1090 (68 aa).

The first 23 residues, 1-23, serve as a signal peptide directing secretion; that stretch reads MKTQFAIFLITLVLFQMFSQSDA. Phe36 bears the Phenylalanine amide mark. The propeptide occupies 40–68; sequence GLSDLDDLDESFDGEVSQADIDFLKELMQ.

It belongs to the non-disulfide-bridged peptide (NDBP) superfamily. Short antimicrobial peptide (group 4) family. In terms of tissue distribution, expressed by the venom gland.

It localises to the secreted. The protein resides in the target cell membrane. In terms of biological role, amphipathic peptide which inhibits the growth of Gram-positive bacteria. The chain is Peptide Hp1090 from Heterometrus petersii (Asian forest scorpion).